Reading from the N-terminus, the 193-residue chain is Pyridoxal 5'-phosphate synthase subunit PdxT (193 aa).

Residue Gly-48–Ser-50 participates in L-glutamine binding. Residue Cys-80 is the Nucleophile of the active site. Residues Arg-112 and Ile-140 to Arg-141 each bind L-glutamine. Residues His-176 and Glu-178 each act as charge relay system in the active site.

This sequence belongs to the glutaminase PdxT/SNO family. In the presence of PdxS, forms a dodecamer of heterodimers. Only shows activity in the heterodimer.

It carries out the reaction aldehydo-D-ribose 5-phosphate + D-glyceraldehyde 3-phosphate + L-glutamine = pyridoxal 5'-phosphate + L-glutamate + phosphate + 3 H2O + H(+). It catalyses the reaction L-glutamine + H2O = L-glutamate + NH4(+). It participates in cofactor biosynthesis; pyridoxal 5'-phosphate biosynthesis. In terms of biological role, catalyzes the hydrolysis of glutamine to glutamate and ammonia as part of the biosynthesis of pyridoxal 5'-phosphate. The resulting ammonia molecule is channeled to the active site of PdxS. In Mycolicibacterium smegmatis (strain ATCC 700084 / mc(2)155) (Mycobacterium smegmatis), this protein is Pyridoxal 5'-phosphate synthase subunit PdxT.